A 149-amino-acid polypeptide reads, in one-letter code: 4-hydroxyphenylacetate 3-monooxygenase, reductase component (149 aa).

FAD is bound at residue 27–34 (ERGMTATA). Ser37 contacts NAD(+). FAD-binding positions include 48–50 (AVS), 54–55 (KL), and His80. Residues His116 and 137–140 (YFQR) contribute to the NAD(+) site.

It belongs to the non-flavoprotein flavin reductase family. HpaC subfamily. In terms of assembly, homodimer. 4-HPA 3-monooxygenase consists of a reductase component HpaC and an oxygenase component HpaB.

The catalysed reaction is a reduced flavin + NAD(+) = an oxidized flavin + NADH + 2 H(+). It participates in aromatic compound metabolism; 4-hydroxyphenylacetate degradation; pyruvate and succinate semialdehyde from 4-hydroxyphenylacetate: step 1/7. Functionally, catalyzes the reduction of free flavins (FMN, FAD and riboflavin) by NADH. Subsequently, the reduced flavins diffuse to the large HpaB component. It utilizes NADH, but not NADPH as an electron donor, and both FAD and FMN as electron acceptors. The polypeptide is 4-hydroxyphenylacetate 3-monooxygenase, reductase component (Thermus thermophilus (strain ATCC 27634 / DSM 579 / HB8)).